The sequence spans 255 residues: uncharacterized protein (255 aa).

[4Fe-4S] cluster-binding residues include C122 and C160.

As to quaternary structure, homodimer. [4Fe-4S] cluster is required as a cofactor.

This is an uncharacterized protein from Escherichia coli (strain K12).